Consider the following 458-residue polypeptide: NADH-ubiquinone oxidoreductase chain 4 (458 aa).

13 consecutive transmembrane segments (helical) span residues 23–43, 59–79, 99–119, 148–168, 174–194, 197–217, 227–247, 260–280, 289–311, 315–337, 355–375, 396–416, and 438–458; these read LLWT…TLTL, IDQF…LTIM, LLIL…LLMF, LYFL…LIMI, SLSI…TPWS, LWWI…IFHL, PIAG…YGMI, LAVP…SICL, IAYS…TPWA, ALAM…NITY, FPLM…LPPF, ILLL…MLIM, and LMLM…AIMI.

It belongs to the complex I subunit 4 family.

It is found in the mitochondrion membrane. The catalysed reaction is a ubiquinone + NADH + 5 H(+)(in) = a ubiquinol + NAD(+) + 4 H(+)(out). In terms of biological role, core subunit of the mitochondrial membrane respiratory chain NADH dehydrogenase (Complex I) that is believed to belong to the minimal assembly required for catalysis. Complex I functions in the transfer of electrons from NADH to the respiratory chain. The immediate electron acceptor for the enzyme is believed to be ubiquinone. This is NADH-ubiquinone oxidoreductase chain 4 (MT-ND4) from Petromyzon marinus (Sea lamprey).